The following is a 565-amino-acid chain: NAD-dependent malic enzyme (565 aa).

Tyr104 functions as the Proton donor in the catalytic mechanism. Arg157 provides a ligand contact to NAD(+). Lys175 functions as the Proton acceptor in the catalytic mechanism. Residues Glu246, Asp247, and Asp270 each contribute to the a divalent metal cation site. The NAD(+) site is built by Asp270 and Asn418.

It belongs to the malic enzymes family. As to quaternary structure, homotetramer. It depends on Mg(2+) as a cofactor. Mn(2+) serves as cofactor.

It carries out the reaction (S)-malate + NAD(+) = pyruvate + CO2 + NADH. It catalyses the reaction oxaloacetate + H(+) = pyruvate + CO2. In Escherichia coli O139:H28 (strain E24377A / ETEC), this protein is NAD-dependent malic enzyme.